The sequence spans 290 residues: N-acetylmannosamine kinase (290 aa).

ATP-binding positions include 6–13 (ALDIGGTK) and 132–139 (GVGGGIIL). Residues His156, Cys166, Cys168, and Cys173 each coordinate Zn(2+).

This sequence belongs to the ROK (NagC/XylR) family. NanK subfamily. As to quaternary structure, homodimer.

It carries out the reaction an N-acyl-D-mannosamine + ATP = an N-acyl-D-mannosamine 6-phosphate + ADP + H(+). It participates in amino-sugar metabolism; N-acetylneuraminate degradation; D-fructose 6-phosphate from N-acetylneuraminate: step 2/5. Its function is as follows. Catalyzes the phosphorylation of N-acetylmannosamine (ManNAc) to ManNAc-6-P. In Yersinia pestis (strain Pestoides F), this protein is N-acetylmannosamine kinase.